The chain runs to 115 residues: MRVGCDIIAISRIEKIHSRHGKNFLDKFLSPKEQILIKNPATLAGLWAAKEAASKALGVGICELCSFFDIEISKDERNAPKLKYSQKITKDFNITQTSLSISHDNGFAIAIVAIV.

D6 and E51 together coordinate Mg(2+).

This sequence belongs to the P-Pant transferase superfamily. AcpS family. Requires Mg(2+) as cofactor.

It is found in the cytoplasm. The catalysed reaction is apo-[ACP] + CoA = holo-[ACP] + adenosine 3',5'-bisphosphate + H(+). Functionally, transfers the 4'-phosphopantetheine moiety from coenzyme A to a Ser of acyl-carrier-protein. The chain is Holo-[acyl-carrier-protein] synthase from Campylobacter jejuni subsp. doylei (strain ATCC BAA-1458 / RM4099 / 269.97).